The chain runs to 148 residues: 3-dehydroquinate dehydratase (148 aa).

Tyrosine 26 acts as the Proton acceptor in catalysis. Asparagine 77, histidine 83, and aspartate 90 together coordinate substrate. Residue histidine 103 is the Proton donor of the active site. Substrate contacts are provided by residues 104-105 (LS) and arginine 114.

This sequence belongs to the type-II 3-dehydroquinase family. In terms of assembly, homododecamer.

It catalyses the reaction 3-dehydroquinate = 3-dehydroshikimate + H2O. The protein operates within metabolic intermediate biosynthesis; chorismate biosynthesis; chorismate from D-erythrose 4-phosphate and phosphoenolpyruvate: step 3/7. Functionally, catalyzes a trans-dehydration via an enolate intermediate. This is 3-dehydroquinate dehydratase from Chlorobaculum tepidum (strain ATCC 49652 / DSM 12025 / NBRC 103806 / TLS) (Chlorobium tepidum).